Consider the following 465-residue polypeptide: Methylenetetrahydrofolate--tRNA-(uracil-5-)-methyltransferase TrmFO (465 aa).

Position 11 to 16 (11 to 16 (GGGLAG)) interacts with FAD.

The protein belongs to the MnmG family. TrmFO subfamily. FAD serves as cofactor.

The protein localises to the cytoplasm. It carries out the reaction uridine(54) in tRNA + (6R)-5,10-methylene-5,6,7,8-tetrahydrofolate + NADH + H(+) = 5-methyluridine(54) in tRNA + (6S)-5,6,7,8-tetrahydrofolate + NAD(+). It catalyses the reaction uridine(54) in tRNA + (6R)-5,10-methylene-5,6,7,8-tetrahydrofolate + NADPH + H(+) = 5-methyluridine(54) in tRNA + (6S)-5,6,7,8-tetrahydrofolate + NADP(+). Catalyzes the folate-dependent formation of 5-methyl-uridine at position 54 (M-5-U54) in all tRNAs. The polypeptide is Methylenetetrahydrofolate--tRNA-(uracil-5-)-methyltransferase TrmFO (Acaryochloris marina (strain MBIC 11017)).